The following is a 545-amino-acid chain: Chaperonin GroEL 1 (545 aa).

Residues 29-32, 86-90, Gly413, 479-481, and Asp495 each bind ATP; these read TLGP, DGTTT, and DAA. A disordered region spans residues 525 to 545; sequence PEPKENNPAGSGAGMGGDFDY. The segment covering 535–545 has biased composition (gly residues); that stretch reads SGAGMGGDFDY.

The protein belongs to the chaperonin (HSP60) family. In terms of assembly, forms a cylinder of 14 subunits composed of two heptameric rings stacked back-to-back. Interacts with the co-chaperonin GroES.

It is found in the cytoplasm. It catalyses the reaction ATP + H2O + a folded polypeptide = ADP + phosphate + an unfolded polypeptide.. Its function is as follows. Together with its co-chaperonin GroES, plays an essential role in assisting protein folding. The GroEL-GroES system forms a nano-cage that allows encapsulation of the non-native substrate proteins and provides a physical environment optimized to promote and accelerate protein folding. This chain is Chaperonin GroEL 1, found in Thermosynechococcus vestitus (strain NIES-2133 / IAM M-273 / BP-1).